The sequence spans 126 residues: Large ribosomal subunit protein uL22c (126 aa).

This sequence belongs to the universal ribosomal protein uL22 family. As to quaternary structure, part of the 50S ribosomal subunit.

It localises to the plastid. It is found in the chloroplast. This protein binds specifically to 23S rRNA. In terms of biological role, the globular domain of the protein is located near the polypeptide exit tunnel on the outside of the subunit, while an extended beta-hairpin is found that lines the wall of the exit tunnel in the center of the 70S ribosome. This chain is Large ribosomal subunit protein uL22c (rpl22), found in Cryptomeria japonica (Japanese cedar).